A 405-amino-acid chain; its full sequence is BRCA1-A complex subunit Abraxas 1 (405 aa).

In terms of domain architecture, MPN spans S7–L153. Residues S208–I262 adopt a coiled-coil conformation. Residues L365–F405 form a disordered region. S402 bears the Phosphoserine mark. A pSXXF motif motif is present at residues S402 to F405.

It belongs to the FAM175 family. Abraxas subfamily. As to quaternary structure, component of the BRCA1-A complex. Component of the BRISC complex. Homodimer. Interacts directly (when phosphorylated at Ser-402) with BRCA1. The phosphorylated homodimer can interact directly with two BRCA1 chains, giving rise to a heterotetramer. Post-translationally, phosphorylation of Ser-402 of the pSXXF motif by ATM or ATR constitutes a specific recognition motif for the BRCT domain of BRCA1.

The protein resides in the nucleus. Functionally, involved in DNA damage response and double-strand break (DSB) repair. Component of the BRCA1-A complex, acting as a central scaffold protein that assembles the various components of the complex and mediates the recruitment of BRCA1. The BRCA1-A complex specifically recognizes 'Lys-63'-linked ubiquitinated histones H2A and H2AX at DNA lesion sites, leading to target the BRCA1-BARD1 heterodimer to sites of DNA damage at DSBs. This complex also possesses deubiquitinase activity that specifically removes 'Lys-63'-linked ubiquitin on histones H2A and H2AX. This chain is BRCA1-A complex subunit Abraxas 1, found in Gallus gallus (Chicken).